The primary structure comprises 373 residues: 3-isopropylmalate dehydrogenase (373 aa).

Position 82 to 93 (82 to 93 (GPKWGTGAVRPE)) interacts with NAD(+). The substrate site is built by Arg-100, Arg-110, Arg-139, and Asp-231. Mg(2+)-binding residues include Asp-231 and Asp-260. An NAD(+)-binding site is contributed by 295-306 (GSAPDLPENKVN).

Belongs to the isocitrate and isopropylmalate dehydrogenases family. In terms of assembly, homodimer. The cofactor is Mg(2+). Mn(2+) is required as a cofactor.

It localises to the cytoplasm. The catalysed reaction is (2R,3S)-3-isopropylmalate + NAD(+) = 4-methyl-2-oxopentanoate + CO2 + NADH. It participates in amino-acid biosynthesis; L-leucine biosynthesis; L-leucine from 3-methyl-2-oxobutanoate: step 3/4. Its function is as follows. Catalyzes the oxidation of 3-carboxy-2-hydroxy-4-methylpentanoate (3-isopropylmalate) to 3-carboxy-4-methyl-2-oxopentanoate. The product decarboxylates to 4-methyl-2 oxopentanoate. The sequence is that of 3-isopropylmalate dehydrogenase (LEU2) from Scheffersomyces stipitis (strain ATCC 58785 / CBS 6054 / NBRC 10063 / NRRL Y-11545) (Yeast).